The chain runs to 374 residues: Isocitrate dehydrogenase [NAD] catalytic subunit 5, mitochondrial (374 aa).

The transit peptide at 1–44 (MTMAANLARRLIGNRSTQILGAVNSSSGAASSVARAFCSSTTPI) directs the protein to the mitochondrion. Substrate contacts are provided by Arg-127, Arg-137, Arg-158, and Asp-245. Mg(2+)-binding residues include Asp-245, Asp-269, and Asp-273.

The protein belongs to the isocitrate and isopropylmalate dehydrogenases family. In terms of assembly, heterooligomer of catalytic and regulatory subunits. The cofactor is Mg(2+). Requires Mn(2+) as cofactor. As to expression, ubiquitous.

The protein localises to the mitochondrion. The enzyme catalyses D-threo-isocitrate + NAD(+) = 2-oxoglutarate + CO2 + NADH. In terms of biological role, performs an essential role in the oxidative function of the citric acid cycle. The polypeptide is Isocitrate dehydrogenase [NAD] catalytic subunit 5, mitochondrial (IDH5) (Arabidopsis thaliana (Mouse-ear cress)).